The sequence spans 921 residues: Dual serine/threonine and tyrosine protein kinase (921 aa).

In terms of domain architecture, Protein kinase spans 645–899; sequence PKLGRELGRG…PLLGIVEPSL (255 aa). ATP contacts are provided by residues 651–659 and K674; that span reads LGRGQYGVV. The active-site Proton acceptor is the D770.

Belongs to the protein kinase superfamily. Ser/Thr protein kinase family.

It is found in the cytoplasm. It localises to the cell membrane. Its subcellular location is the apical cell membrane. The protein resides in the basolateral cell membrane. The protein localises to the cell junction. It catalyses the reaction L-seryl-[protein] + ATP = O-phospho-L-seryl-[protein] + ADP + H(+). It carries out the reaction L-threonyl-[protein] + ATP = O-phospho-L-threonyl-[protein] + ADP + H(+). The catalysed reaction is L-tyrosyl-[protein] + ATP = O-phospho-L-tyrosyl-[protein] + ADP + H(+). Its function is as follows. May act as a positive regulator of ERK phosphorylation downstream of fibroblast growth factor-receptor activation. May induce both caspase-dependent apoptosis and caspase-independent cell death. May play a role in the embryonic development. The chain is Dual serine/threonine and tyrosine protein kinase (dstyk) from Takifugu rubripes (Japanese pufferfish).